Consider the following 142-residue polypeptide: MGTPASVVSEPPLWQVSTPQTRGRKQASANIFQDAELVQIQGLFQRSGDQLAEERAQIIWECAGDHRVAEALRRLRRKRPPKQNHCSRLRVPEPGSTASDPQASTTDTASSEQSGNSRRTSARAPRNWNKPGPTGYLHQIRH.

Disordered regions lie at residues 1–28 (MGTP…KQAS) and 74–142 (RLRR…QIRH). Residues 15-28 (QVSTPQTRGRKQAS) are compositionally biased toward polar residues. Over residues 74–88 (RLRRKRPPKQNHCSR) the composition is skewed to basic residues. The span at 96 to 119 (STASDPQASTTDTASSEQSGNSRR) shows a compositional bias: polar residues.

In terms of biological role, may be involved in MAP kinase activation, epithelial sodium channel (ENaC) down-regulation and cell cycling. In Mus musculus (Mouse), this protein is Arginine vasopressin-induced protein 1 (Avpi1).